A 274-amino-acid polypeptide reads, in one-letter code: Large ribosomal subunit protein uL2cz/uL2cy (274 aa).

Residues 225 to 274 are disordered; it reads NPVDHPHGGGEGRAPIGRKKPTTPWGYPALGRRSRKRKKYSDSFILRRRK.

It belongs to the universal ribosomal protein uL2 family. As to quaternary structure, part of the 50S ribosomal subunit.

The protein localises to the plastid. It is found in the chloroplast. The polypeptide is Large ribosomal subunit protein uL2cz/uL2cy (rpl2-A) (Dioscorea elephantipes (Elephant's foot yam)).